We begin with the raw amino-acid sequence, 213 residues long: Adenylate kinase (213 aa).

10-15 contributes to the ATP binding site; that stretch reads GSGKGS. The interval 30–60 is NMP; sequence STGNLFRAILKEDSELARKIKEINVSGGKLV. AMP contacts are provided by residues T31, R36, 58-60, 87-90, and Q94; these read KLV and GYPR. Residues 123–160 are LID; sequence GRWMCPKCAGIYNIHFKKPQVHGLCDNDQATLYQRADD. An ATP-binding site is contributed by R124. C127 and C130 together coordinate Zn(2+). 133–134 contacts ATP; that stretch reads IY. Positions 147 and 150 each coordinate Zn(2+). Residues R157 and R168 each contribute to the AMP site. Q196 provides a ligand contact to ATP.

It belongs to the adenylate kinase family. Monomer.

Its subcellular location is the cytoplasm. The catalysed reaction is AMP + ATP = 2 ADP. The protein operates within purine metabolism; AMP biosynthesis via salvage pathway; AMP from ADP: step 1/1. In terms of biological role, catalyzes the reversible transfer of the terminal phosphate group between ATP and AMP. Plays an important role in cellular energy homeostasis and in adenine nucleotide metabolism. This Ureaplasma parvum serovar 3 (strain ATCC 27815 / 27 / NCTC 11736) protein is Adenylate kinase.